Consider the following 404-residue polypeptide: Major outer membrane porin (404 aa).

An N-terminal signal peptide occupies residues 1–22; it reads MKKLLKSVLAFAVLGSASSLHA. The disordered stretch occupies residues 85-110; it reads GPVPTTTDTDAAADITTSTPRENPAY. Low complexity predominate over residues 89–103; that stretch reads TTTDTDAAADITTST.

Belongs to the chlamydial porin (CP) (TC 1.B.2) family. In terms of assembly, part of a disulfide cross-linked outer membrane complex (COMC) composed of the major outer membrane porin (MOMP), the small cysteine-rich protein (OmcA) and the large cysteine-rich periplasmic protein (OmcB).

The protein resides in the cell outer membrane. In terms of biological role, in elementary bodies (EBs, the infectious stage, which is able to survive outside the host cell) provides the structural integrity of the outer envelope through disulfide cross-links with the small cysteine-rich protein and the large cysteine-rich periplasmic protein. It has been described in publications as the Sarkosyl-insoluble COMC (Chlamydia outer membrane complex), and serves as the functional equivalent of peptidoglycan. Permits diffusion of specific solutes through the outer membrane. The protein is Major outer membrane porin (ompA) of Chlamydia muridarum.